The primary structure comprises 264 residues: Acyl-[acyl-carrier-protein]--UDP-N-acetylglucosamine O-acyltransferase (264 aa).

This sequence belongs to the transferase hexapeptide repeat family. LpxA subfamily. Homotrimer.

Its subcellular location is the cytoplasm. It carries out the reaction a (3R)-hydroxyacyl-[ACP] + UDP-N-acetyl-alpha-D-glucosamine = a UDP-3-O-[(3R)-3-hydroxyacyl]-N-acetyl-alpha-D-glucosamine + holo-[ACP]. The protein operates within glycolipid biosynthesis; lipid IV(A) biosynthesis; lipid IV(A) from (3R)-3-hydroxytetradecanoyl-[acyl-carrier-protein] and UDP-N-acetyl-alpha-D-glucosamine: step 1/6. Functionally, involved in the biosynthesis of lipid A, a phosphorylated glycolipid that anchors the lipopolysaccharide to the outer membrane of the cell. This chain is Acyl-[acyl-carrier-protein]--UDP-N-acetylglucosamine O-acyltransferase, found in Rickettsia africae (strain ESF-5).